The chain runs to 242 residues: Small ribosomal subunit protein uS2 (242 aa).

Belongs to the universal ribosomal protein uS2 family.

The sequence is that of Small ribosomal subunit protein uS2 from Photobacterium profundum (strain SS9).